A 189-amino-acid polypeptide reads, in one-letter code: Putative manganese efflux pump MntP (189 aa).

A run of 6 helical transmembrane segments spans residues 3 to 23 (PVAT…AAIG), 41 to 61 (LIFG…GKAA), 62 to 82 (AQYV…VLGA), 104 to 124 (FWLL…VGAG), 132 to 152 (IYST…IGVM), and 168 to 188 (AGGI…LNIF).

It belongs to the MntP (TC 9.B.29) family.

The protein resides in the cell inner membrane. Probably functions as a manganese efflux pump. The protein is Putative manganese efflux pump MntP of Paraburkholderia phytofirmans (strain DSM 17436 / LMG 22146 / PsJN) (Burkholderia phytofirmans).